We begin with the raw amino-acid sequence, 427 residues long: Serine hydroxymethyltransferase (427 aa).

Residues Leu127 and Gly131 to Leu133 contribute to the (6S)-5,6,7,8-tetrahydrofolate site. Lys236 bears the N6-(pyridoxal phosphate)lysine mark.

Belongs to the SHMT family. Homodimer. Pyridoxal 5'-phosphate serves as cofactor.

The protein localises to the cytoplasm. The catalysed reaction is (6R)-5,10-methylene-5,6,7,8-tetrahydrofolate + glycine + H2O = (6S)-5,6,7,8-tetrahydrofolate + L-serine. Its pathway is one-carbon metabolism; tetrahydrofolate interconversion. It functions in the pathway amino-acid biosynthesis; glycine biosynthesis; glycine from L-serine: step 1/1. Catalyzes the reversible interconversion of serine and glycine with tetrahydrofolate (THF) serving as the one-carbon carrier. This reaction serves as the major source of one-carbon groups required for the biosynthesis of purines, thymidylate, methionine, and other important biomolecules. Also exhibits THF-independent aldolase activity toward beta-hydroxyamino acids, producing glycine and aldehydes, via a retro-aldol mechanism. This chain is Serine hydroxymethyltransferase, found in Paramagnetospirillum magneticum (strain ATCC 700264 / AMB-1) (Magnetospirillum magneticum).